We begin with the raw amino-acid sequence, 396 residues long: DNA replication and repair protein RecF (396 aa).

30–37 lines the ATP pocket; sequence GANGSGKT.

Belongs to the RecF family.

Its subcellular location is the cytoplasm. The RecF protein is involved in DNA metabolism; it is required for DNA replication and normal SOS inducibility. RecF binds preferentially to single-stranded, linear DNA. It also seems to bind ATP. This is DNA replication and repair protein RecF from Thermomicrobium roseum (strain ATCC 27502 / DSM 5159 / P-2).